The primary structure comprises 335 residues: Ferrochelatase (335 aa).

Residues His207 and Glu288 each contribute to the Fe cation site.

It belongs to the ferrochelatase family.

It localises to the cytoplasm. The catalysed reaction is heme b + 2 H(+) = protoporphyrin IX + Fe(2+). It participates in porphyrin-containing compound metabolism; protoheme biosynthesis; protoheme from protoporphyrin-IX: step 1/1. Functionally, catalyzes the ferrous insertion into protoporphyrin IX. The sequence is that of Ferrochelatase from Helicobacter pylori (strain HPAG1).